A 617-amino-acid chain; its full sequence is Secretogranin-2 (617 aa).

The first 30 residues, 1-30 (MAGAKAYRLGAVLLLIHLIFLISGAEAASF), serve as a signal peptide directing secretion. Tyrosine 153 carries the post-translational modification Sulfotyrosine. Serine 176 and serine 270 each carry phosphoserine. 2 stretches are compositionally biased toward basic and acidic residues: residues 261–286 (TQTQ…EMKR) and 295–307 (EENR…QLSE). Residues 261–307 (TQTQEEVRDSKENTEKNEQINEEMKRSGQLGLPDEENRRESKDQLSE) form a disordered region. Phosphoserine occurs at positions 434, 532, 555, and 556.

This sequence belongs to the chromogranin/secretogranin protein family. Interacts with Secretogranin III/SCG3.

The protein localises to the secreted. Its function is as follows. Neuroendocrine protein of the granin family that regulates the biogenesis of secretory granules. In Mus musculus (Mouse), this protein is Secretogranin-2 (Scg2).